A 267-amino-acid chain; its full sequence is MDMERNRLYFFYKRDDKLIERVKPLIELAERGPFVVVDDYREANIIVSIGDDGAFLQAVRQTGFLPDRLYVGVSVLPARGFYCDFHIDDIDHMVEAAKNWKLEVRRYPIIEVTIDGAASFFCLNECSIRSQIIKTMAIDVFIDDLHFETFRGDGIIVSTPTGSTGYNKSVHGAVVDPLLPCFQVSELASLNSNRYRTLGSPFILSGSRTLTLKMSEETSHFPIIGLDNEALSIQHIERIDIRLSDRVVKTVRLKDNSFWDKVKRVFL.

The active-site Proton acceptor is the Asp52. Residues 52 to 53 (DG), 124 to 125 (NE), Arg151, Asp153, 164 to 169 (TGYNKS), and Ala188 contribute to the NAD(+) site.

Belongs to the NAD kinase family. A divalent metal cation is required as a cofactor.

It localises to the cytoplasm. It catalyses the reaction NAD(+) + ATP = ADP + NADP(+) + H(+). Functionally, involved in the regulation of the intracellular balance of NAD and NADP, and is a key enzyme in the biosynthesis of NADP. Catalyzes specifically the phosphorylation on 2'-hydroxyl of the adenosine moiety of NAD to yield NADP. This Geobacillus kaustophilus (strain HTA426) protein is NAD kinase 2.